Consider the following 336-residue polypeptide: MPAYDNTSSVSGGDQTVCVTGAGGFIASWLVKLLLERGYTVRGTVRNPEDPKNGHLKELEGARERLTLHKVDLLDLQSIQSVVHGCHGVFHTASPVTDNPDEMLEPAVNGTKNVIIASAEAKVRRVVFTSSIGTVYMDPNTSRDVVVDESYWSDLEHCKNTKNWYCYGKTVAEQSAWDIAKENQVDLVVVNPVVVLGPLLQPTINASTIHILKYLNGAAKTYVNATQSYVHVKDVALAHLLVYETNSASGRYICCETALHRGEVVEILAKYFPEYPLPTKCSDEKNPRVKPYKFSNQKLKDLGLEFTPVKQCLYDTVRSLQEKGHLPIPPMQEDSA.

Residues 21-27, arginine 46, lysine 52, 72-73, 92-94, tyrosine 165, lysine 169, 192-195, and serine 207 each bind NADP(+); these read GAGGFIA, DL, TAS, and PVVV. Cysteine 158 and cysteine 166 are joined by a disulfide. Lysine 169 functions as the Proton donor in the catalytic mechanism.

This sequence belongs to the NAD(P)-dependent epimerase/dehydratase family. Dihydroflavonol-4-reductase subfamily. In terms of processing, the formation of a reversible disulfide bond reduces activity by perturbing the positioning of nearby catalytic residues. As to expression, mainly expressed in roots and stems, especially at the second internode and, to a lower extent, in leaves and flowers. Localized in vascular elements, with weaker expression in the interfascicular (xylem fiber) region.

It localises to the cytoplasm. The enzyme catalyses (E)-coniferaldehyde + NADP(+) + CoA = (E)-feruloyl-CoA + NADPH + H(+). The catalysed reaction is (E)-4-coumaraldehyde + NADP(+) + CoA = (E)-4-coumaroyl-CoA + NADPH + H(+). It catalyses the reaction (E)-sinapaldehyde + NADP(+) + CoA = (E)-sinapoyl-CoA + NADPH + H(+). It carries out the reaction (E)-cinnamaldehyde + NADP(+) + CoA = (E)-cinnamoyl-CoA + NADPH + H(+). The enzyme catalyses (E)-caffeyl aldehyde + NADP(+) + CoA = (E)-caffeoyl-CoA + NADPH + H(+). It functions in the pathway aromatic compound metabolism; phenylpropanoid biosynthesis. Functionally, involved in the latter stages of lignin biosynthesis. Catalyzes one of the last steps of monolignol biosynthesis, the conversion of cinnamoyl-CoAs into their corresponding cinnamaldehydes. Mediates the conversion of caffeoyl-CoA and coumaroyl-CoA to caffaldehyde and coumaraldehyde, respectively. Also active, with a lower efficiency, toward feruloyl-CoA and sinapoyl-CoA. Involved in the production of floral volatile phenylpropanoids in flowers of fragrant cultivars from cinnamic acid, a common precursor with the anthocyanin biosynthesis pathway involved in flower pigmentation. The sequence is that of Cinnamoyl-CoA reductase 2 from Medicago truncatula (Barrel medic).